The chain runs to 598 residues: MEVEPPLYPVAGAAGPQGDEDRHGVPDGPEAPLDELVGAYPNYNEEEEERRYYRRKRLGVVKNVLAASTGVTLTYGVYLGLLQMQLILHYDETYREVKYGNMGLPDIDSKMLMGINVTPIAALLYTPVLIRFFGTKWMMFLAVGIYALFVSTNYWERYYTLVPSAVALGMAIVPLWASMGNYITRMSQKYYEYSHYKEQDEQGPQQRPPRGSHAPYLLVFQAIFYSFFHLSFACAQLPMIYFLNNYLYDLNHTLINVQSCGTKSQGILNGFNKTVLRTLPRSKNLIVVESVLMAVAFLAMLMVLGLCGAAYRPTEEIDLRSVGWGNIFQLPFKHVRDFRLRHLVPFFIYSGFEVLFACTGFALGYGVCSMGLERLAYLLIAYSLGASASSVLGLLGLWLPRSVPLVAGAGLHLLLTLSLFFWAPAPRVLQHSWIFYFVAALWGVGSALNKTGLSTLLGILYEDKERQDFIFTIYHWWQAVAIFVVYLGSSLPMKAKLAVLLVTLVAAAASYLWMEQKLQQGLVPRQPRIPKPQHKVRGYRYLEEDNSDESDMEGEQGQGDCAEDEAPQAGPLGAEPAGPCRKPCPYEQALGGDGPEEQ.

The segment at 1 to 36 (MEVEPPLYPVAGAAGPQGDEDRHGVPDGPEAPLDEL) is disordered. Transmembrane regions (helical) follow at residues 64–84 (VLAA…LLQM), 110–130 (KMLM…PVLI), 132–152 (FFGT…FVST), 160–180 (TLVP…ASMG), and 223–243 (IFYS…IYFL). 2 N-linked (GlcNAc...) asparagine glycosylation sites follow: asparagine 251 and asparagine 272. 5 helical membrane passes run 285-305 (LIVV…MVLG), 343-363 (LVPF…GFAL), 378-398 (LLIA…LGLW), 403-423 (VPLV…FFWA), and 428-448 (VLQH…GSAL). Residue asparagine 449 is glycosylated (N-linked (GlcNAc...) asparagine). A run of 2 helical transmembrane segments spans residues 469–489 (FIFT…YLGS) and 495–515 (AKLA…LWME). Positions 524–598 (PRQPRIPKPQ…ALGGDGPEEQ (75 aa)) are disordered. Acidic residues predominate over residues 544 to 554 (EDNSDESDMEG). Serine 547 and serine 550 each carry phosphoserine.

It belongs to the unc-93 family. As to quaternary structure, interacts with TLR3, TLR5, TLR7, TLR8, TLR9 and TLR13 (probably via transmembrane domain). N-glycosylated.

Its subcellular location is the endoplasmic reticulum membrane. The protein localises to the endosome. The protein resides in the lysosome. It is found in the cytoplasmic vesicle. It localises to the phagosome. In terms of biological role, plays an important role in innate and adaptive immunity by regulating nucleotide-sensing Toll-like receptor (TLR) signaling. Required for the transport of a subset of TLRs (including TLR3, TLR7 and TLR9) from the endoplasmic reticulum to endolysosomes where they can engage pathogen nucleotides and activate signaling cascades. May play a role in autoreactive B-cells removal. This is Protein unc-93 homolog B1 from Mus musculus (Mouse).